The following is a 299-amino-acid chain: Zeta-sarcoglycan (299 aa).

The Cytoplasmic portion of the chain corresponds to 1–37 (MTREQYILATQQNNLPRTENAQLYPVGIYGWRKRCLY). A helical; Signal-anchor for type II membrane protein membrane pass occupies residues 38–58 (FFVLLLLVTMIVNLAMTIWIL). Topologically, residues 59–299 (KVMNFTVDGM…QSSSNICLWS (241 aa)) are extracellular. 2 N-linked (GlcNAc...) asparagine glycosylation sites follow: Asn62 and Asn110. Residues Cys273 and Cys289 are joined by a disulfide bond.

The protein belongs to the sarcoglycan beta/delta/gamma/zeta family.

The protein resides in the cell membrane. Its subcellular location is the sarcolemma. It localises to the cytoplasm. The protein localises to the cytoskeleton. In terms of biological role, component of the sarcoglycan complex, a subcomplex of the dystrophin-glycoprotein complex which forms a link between the F-actin cytoskeleton and the extracellular matrix. May play a role in the maintenance of striated muscle membrane stability. This Homo sapiens (Human) protein is Zeta-sarcoglycan (SGCZ).